The following is a 215-amino-acid chain: Large ribosomal subunit protein uL3 (215 aa).

Gln151 is subject to N5-methylglutamine.

This sequence belongs to the universal ribosomal protein uL3 family. Part of the 50S ribosomal subunit. Forms a cluster with proteins L14 and L19. Methylated by PrmB.

Its function is as follows. One of the primary rRNA binding proteins, it binds directly near the 3'-end of the 23S rRNA, where it nucleates assembly of the 50S subunit. The sequence is that of Large ribosomal subunit protein uL3 from Rickettsia bellii (strain OSU 85-389).